The following is a 175-amino-acid chain: Shikimate kinase (175 aa).

Position 14–19 (14–19) interacts with ATP; the sequence is GAGKST. Ser18 contacts Mg(2+). Asp36, Arg60, and Gly82 together coordinate substrate. Arg120 contributes to the ATP binding site. Arg140 contacts substrate. Gln157 serves as a coordination point for ATP.

Belongs to the shikimate kinase family. In terms of assembly, monomer. It depends on Mg(2+) as a cofactor.

It is found in the cytoplasm. It catalyses the reaction shikimate + ATP = 3-phosphoshikimate + ADP + H(+). The protein operates within metabolic intermediate biosynthesis; chorismate biosynthesis; chorismate from D-erythrose 4-phosphate and phosphoenolpyruvate: step 5/7. Its function is as follows. Catalyzes the specific phosphorylation of the 3-hydroxyl group of shikimic acid using ATP as a cosubstrate. The chain is Shikimate kinase from Actinobacillus succinogenes (strain ATCC 55618 / DSM 22257 / CCUG 43843 / 130Z).